Here is a 479-residue protein sequence, read N- to C-terminus: Auxin transporter-like protein 1 (479 aa).

Over 1-58 (MLSEKQGEETMMSSLNETIELNEEREEEKGASPGSGFKNFLWHGGSVYDAWFSCASNQ) the chain is Cytoplasmic. A helical membrane pass occupies residues 59 to 76 (VAQVLLTLPYSFSQLGMI). The Extracellular segment spans residues 77–78 (SG). A helical transmembrane segment spans residues 79 to 99 (IIFQVFYGLMGSWTAYLISIL). The Cytoplasmic segment spans residues 100-134 (YVEYRSRKEKENVSFKNHVIQWFEVLEGLLGPYWK). The helical transmembrane segment at 135–155 (AIGLAFNCTFLLFGSVIQLIA) threads the bilayer. Residues 156-171 (CASNIYYINDHLDKRT) are Extracellular-facing. A helical transmembrane segment spans residues 172 to 192 (WTYIFGACCATTVFIPSFHNY). At 193–195 (RIW) the chain is on the cytoplasmic side. Residues 196–216 (SFLGLGMTTYTAWYMTIAAIV) traverse the membrane as a helical segment. Topologically, residues 217 to 231 (HGQVENVVHSGPKKM) are extracellular. Residues 232–252 (VWYFTGATNILYTFGGHAVTV) form a helical membrane-spanning segment. The Cytoplasmic segment spans residues 253-265 (EIMHAMWKPQKFK). A helical transmembrane segment spans residues 266-286 (AIYFFATLYVFTLTLPSAIAV). The Extracellular segment spans residues 287–313 (YWAFGDQLLDHSNAFSLLPRNAWRDAG). Residues 314 to 334 (VILMLIHQFITFGFACTPLYF) form a helical membrane-spanning segment. The Cytoplasmic portion of the chain corresponds to 335 to 355 (VWEKVIGMHDTKSIFLRALAR). A helical transmembrane segment spans residues 356-376 (LPVVIPIWFLAIIFPFFGPIN). A topological domain (extracellular) is located at residue S377. The helical transmembrane segment at 378–398 (AVGALLVSFTVYVIPASAHML) threads the bilayer. Over 399–421 (TYRSASARQNAAEKLPKVIPSWT) the chain is Cytoplasmic. Residues 422–442 (LMYVINAFVVIWVTIVGFGFG) traverse the membrane as a helical segment. Residues 443–479 (GWASMTNFIKQVDTFGLFAKCYQCPPKLPASNHTMHH) lie on the Extracellular side of the membrane. N-linked (GlcNAc...) asparagine glycosylation is present at N474.

The protein belongs to the amino acid/polyamine transporter 2 family. Amino acid/auxin permease (AAAP) (TC 2.A.18.1) subfamily. In terms of tissue distribution, shoots and roots of nodulating plants. Higher levels in roots, flowers and stems, lower in nodules, leaves, petioles and shoot apices.

The protein localises to the cell membrane. Its function is as follows. Carrier protein involved in proton-driven auxin influx. Mediates the formation of auxin gradient from developing leaves (site of auxin biosynthesis) to tips by contributing to the loading of auxin in vascular tissues and facilitating acropetal (base to tip) auxin transport within inner tissues of the root apex, and basipetal (tip to base) auxin transport within outer tissues of the root apex. May be involved in lateral roots and nodules formation. This chain is Auxin transporter-like protein 1 (LAX1), found in Medicago truncatula (Barrel medic).